A 553-amino-acid polypeptide reads, in one-letter code: Methionine--tRNA ligase (553 aa).

Positions 12–22 match the 'HIGH' region motif; sequence PYANSQLHLGH. 4 residues coordinate Zn(2+): C144, C147, C157, and C160. A 'KMSKS' region motif is present at residues 332–336; the sequence is KFSKS. K335 is an ATP binding site.

It belongs to the class-I aminoacyl-tRNA synthetase family. MetG type 1 subfamily. As to quaternary structure, monomer. Zn(2+) is required as a cofactor.

The protein resides in the cytoplasm. The catalysed reaction is tRNA(Met) + L-methionine + ATP = L-methionyl-tRNA(Met) + AMP + diphosphate. Functionally, is required not only for elongation of protein synthesis but also for the initiation of all mRNA translation through initiator tRNA(fMet) aminoacylation. In Dehalococcoides mccartyi (strain ATCC BAA-2266 / KCTC 15142 / 195) (Dehalococcoides ethenogenes (strain 195)), this protein is Methionine--tRNA ligase.